The primary structure comprises 233 residues: Large ribosomal subunit protein uL1 (233 aa).

The protein belongs to the universal ribosomal protein uL1 family. In terms of assembly, part of the 50S ribosomal subunit.

Its function is as follows. Binds directly to 23S rRNA. The L1 stalk is quite mobile in the ribosome, and is involved in E site tRNA release. Functionally, protein L1 is also a translational repressor protein, it controls the translation of the L11 operon by binding to its mRNA. The polypeptide is Large ribosomal subunit protein uL1 (Buchnera aphidicola subsp. Baizongia pistaciae (strain Bp)).